The primary structure comprises 53 residues: Putative defensin-like protein 53 (53 aa).

4 cysteine pairs are disulfide-bonded: Cys12–Cys51, Cys16–Cys40, Cys26–Cys49, and Cys30–Cys50.

It belongs to the DEFL family.

The polypeptide is Putative defensin-like protein 53 (Arabidopsis thaliana (Mouse-ear cress)).